Consider the following 142-residue polypeptide: Universal stress protein C (142 aa).

The protein belongs to the universal stress protein A family.

The protein localises to the cytoplasm. In terms of biological role, required for resistance to DNA-damaging agents. The sequence is that of Universal stress protein C (uspC) from Escherichia coli (strain K12).